The chain runs to 79 residues: Tau-theraphotoxin-Hs1a (79 aa).

Intrachain disulfides connect cysteine 2/cysteine 16, cysteine 9/cysteine 23, cysteine 15/cysteine 31, cysteine 44/cysteine 58, cysteine 51/cysteine 63, and cysteine 57/cysteine 71. Domain repeat units lie at residues 2–31 (CAKEGEVCSWGKKCCDLDNFYCPMEFIPHC) and 42–71 (TNCAKEGEVCGWGSKCCHGLDCPLAFIPYC). The tract at residues 2–71 (CAKEGEVCSW…DCPLAFIPYC (70 aa)) is 2 X approximate repeats with cysteine pattern C-C-CC-C-C.

This sequence belongs to the neurotoxin 23 family. Double-knot toxin subfamily. Interacts with TRPV1 (2 toxins (4 moieties) bind 1 channel (homotetramer)). In terms of tissue distribution, expressed by the venom gland.

The protein resides in the secreted. Selectively activates the heat-activated TRPV1 channel. It binds to TRPV1 in an open state-dependent manner, trapping it there to produce irreversible currents. It binds to the outer edge of the external pore of TRPV1 in a counterclockwise configuration, using a limited protein-protein interface and inserting hydrophobic residues into the bilayer. It also partitions naturally into membranes, with the two lobes exhibiting opposing energetics for membrane partitioning (K1) and channel activation (K2). In addition, the toxin disrupts a cluster of hydrophobic residues behind the selectivity filter that are critical for channel activation. The chain is Tau-theraphotoxin-Hs1a from Cyriopagopus schmidti (Chinese bird spider).